A 503-amino-acid polypeptide reads, in one-letter code: GTPase Obg (503 aa).

Residues 2–159 (PQFVDRVVLH…KDVILELKSM (158 aa)) enclose the Obg domain. In terms of domain architecture, OBG-type G spans 160–340 (ADVGLVGFPS…LKYALMDIVK (181 aa)). Residues 166–173 (GFPSAGKS), 191–195 (FTTLV), 212–215 (DVPG), 292–295 (NKMD), and 321–323 (STV) each bind GTP. Positions 173 and 193 each coordinate Mg(2+). Positions 371–444 (EFEVEADPSA…IGEITFEWDP (74 aa)) constitute an OCT domain. Residues 457–476 (RGTDVRLEQNTRATPEERKR) show a composition bias toward basic and acidic residues. The tract at residues 457–503 (RGTDVRLEQNTRATPEERKRASQARRGLIDENDFGDGEVAERERWQG) is disordered.

The protein belongs to the TRAFAC class OBG-HflX-like GTPase superfamily. OBG GTPase family. In terms of assembly, monomer. Requires Mg(2+) as cofactor.

The protein resides in the cytoplasm. Its function is as follows. An essential GTPase which binds GTP, GDP and possibly (p)ppGpp with moderate affinity, with high nucleotide exchange rates and a fairly low GTP hydrolysis rate. Plays a role in control of the cell cycle, stress response, ribosome biogenesis and in those bacteria that undergo differentiation, in morphogenesis control. The polypeptide is GTPase Obg (Corynebacterium jeikeium (strain K411)).